A 251-amino-acid polypeptide reads, in one-letter code: tRNA pseudouridine synthase A (251 aa).

D53 (nucleophile) is an active-site residue. Y110 serves as a coordination point for substrate.

The protein belongs to the tRNA pseudouridine synthase TruA family. As to quaternary structure, homodimer.

The enzyme catalyses uridine(38/39/40) in tRNA = pseudouridine(38/39/40) in tRNA. Its function is as follows. Formation of pseudouridine at positions 38, 39 and 40 in the anticodon stem and loop of transfer RNAs. The chain is tRNA pseudouridine synthase A from Mesoplasma florum (strain ATCC 33453 / NBRC 100688 / NCTC 11704 / L1) (Acholeplasma florum).